Here is a 354-residue protein sequence, read N- to C-terminus: Protein-arginine kinase (354 aa).

One can recognise a Phosphagen kinase C-terminal domain in the interval 24–254 (IVLSSRIRLA…QQIIQQEKMA (231 aa)). Residues 27-31 (SSRIR), H92, R125, 176-180 (RASVM), and 207-212 (RGIYGE) contribute to the ATP site. The short motif at 337 to 342 (RDYRRA) is the RDXXRA motif of the pArg binding pocket involved in allosteric regulation element.

Belongs to the ATP:guanido phosphotransferase family.

It catalyses the reaction L-arginyl-[protein] + ATP = N(omega)-phospho-L-arginyl-[protein] + ADP + H(+). Its activity is regulated as follows. Appears to be allosterically activated by the binding of pArg-containing polypeptides to the pArg-binding pocket localized in the C-terminal domain of McsB. Functionally, catalyzes the specific phosphorylation of arginine residues in a large number of proteins. Is part of the bacterial stress response system. Protein arginine phosphorylation has a physiologically important role and is involved in the regulation of many critical cellular processes, such as protein homeostasis, motility, competence, and stringent and stress responses, by regulating gene expression and protein activity. The sequence is that of Protein-arginine kinase from Bacillus cereus (strain ATCC 10987 / NRS 248).